Consider the following 311-residue polypeptide: tRNA dimethylallyltransferase (311 aa).

12–19 provides a ligand contact to ATP; the sequence is GPTASGKT. 14 to 19 contacts substrate; the sequence is TASGKT. Interaction with substrate tRNA stretches follow at residues 37-40 and 161-165; these read DSAM and QRIQR.

The protein belongs to the IPP transferase family. In terms of assembly, monomer. Mg(2+) is required as a cofactor.

It carries out the reaction adenosine(37) in tRNA + dimethylallyl diphosphate = N(6)-dimethylallyladenosine(37) in tRNA + diphosphate. Functionally, catalyzes the transfer of a dimethylallyl group onto the adenine at position 37 in tRNAs that read codons beginning with uridine, leading to the formation of N6-(dimethylallyl)adenosine (i(6)A). The sequence is that of tRNA dimethylallyltransferase from Coxiella burnetii (strain Dugway 5J108-111).